The primary structure comprises 317 residues: 4-diphosphocytidyl-2-C-methyl-D-erythritol kinase (317 aa).

Lys11 is a catalytic residue. 99–109 is an ATP binding site; that stretch reads PVAAGLAGGST. Asp141 is an active-site residue.

The protein belongs to the GHMP kinase family. IspE subfamily.

It carries out the reaction 4-CDP-2-C-methyl-D-erythritol + ATP = 4-CDP-2-C-methyl-D-erythritol 2-phosphate + ADP + H(+). The protein operates within isoprenoid biosynthesis; isopentenyl diphosphate biosynthesis via DXP pathway; isopentenyl diphosphate from 1-deoxy-D-xylulose 5-phosphate: step 3/6. Its function is as follows. Catalyzes the phosphorylation of the position 2 hydroxy group of 4-diphosphocytidyl-2C-methyl-D-erythritol. This Trichormus variabilis (strain ATCC 29413 / PCC 7937) (Anabaena variabilis) protein is 4-diphosphocytidyl-2-C-methyl-D-erythritol kinase.